The primary structure comprises 396 residues: Maltose/maltodextrin-binding periplasmic protein (396 aa).

An N-terminal signal peptide occupies residues 1–26 (MKIKTGVGILALSALTTMMISAPALA).

It belongs to the bacterial solute-binding protein 1 family. In terms of assembly, the complex is composed of two ATP-binding proteins (MalK), two transmembrane proteins (MalG and MalF) and a solute-binding protein (MalE).

The protein localises to the periplasm. Functionally, part of the ABC transporter complex MalEFGK involved in maltose/maltodextrin import. Binds maltose and higher maltodextrins. The sequence is that of Maltose/maltodextrin-binding periplasmic protein (malE) from Salmonella typhimurium (strain LT2 / SGSC1412 / ATCC 700720).